We begin with the raw amino-acid sequence, 376 residues long: Putative F-box/FBD/LRR-repeat protein At5g52460 (376 aa).

The F-box domain occupies 16–75; sequence RDEISSLPDDLLIQILLLVPIKDAVGTMILSKRWRYVWTLLPKLEYSDPGDECESVWKFL. LRR repeat units lie at residues 131 to 154 and 199 to 224; these read CKTLVELTLSDKIIVDVPSSVCLP and FAKVHKLRLEKPHIDVVCHTDDKFLK. An FBD domain is found at 296–348; the sequence is CHGTNQGTVPRCLSAHLDEEFVWHGYRGNEEETQLIRYIFANAKCLKKREIST.

This is Putative F-box/FBD/LRR-repeat protein At5g52460 (EDA41) from Arabidopsis thaliana (Mouse-ear cress).